Reading from the N-terminus, the 96-residue chain is MPVLAKAALQQALEQRSGWTVVDGQISKTYGLATFPFAIEFVRRIADAAEEVNHHPDIDIRYNKVTIALSTHDEKGITEKDFGLADTIDRIFAAAQ.

It belongs to the pterin-4-alpha-carbinolamine dehydratase family.

It catalyses the reaction (4aS,6R)-4a-hydroxy-L-erythro-5,6,7,8-tetrahydrobiopterin = (6R)-L-erythro-6,7-dihydrobiopterin + H2O. This is Putative pterin-4-alpha-carbinolamine dehydratase from Herpetosiphon aurantiacus (strain ATCC 23779 / DSM 785 / 114-95).